Consider the following 156-residue polypeptide: Small ribosomal subunit protein uS7 (156 aa).

Belongs to the universal ribosomal protein uS7 family. In terms of assembly, part of the 30S ribosomal subunit. Contacts proteins S9 and S11.

Its function is as follows. One of the primary rRNA binding proteins, it binds directly to 16S rRNA where it nucleates assembly of the head domain of the 30S subunit. Is located at the subunit interface close to the decoding center, probably blocks exit of the E-site tRNA. The sequence is that of Small ribosomal subunit protein uS7 from Clostridium botulinum (strain Alaska E43 / Type E3).